A 153-amino-acid polypeptide reads, in one-letter code: Transcriptional repressor NrdR (153 aa).

A zinc finger lies at 3 to 34 (CPFCNNISTNVKDSRSIEDDMLIRRRRVCPVC). The 91-residue stretch at 49–139 (LMVIKKNGGL…VYMNFKNIND (91 aa)) folds into the ATP-cone domain.

It belongs to the NrdR family. Requires Zn(2+) as cofactor.

Negatively regulates transcription of bacterial ribonucleotide reductase nrd genes and operons by binding to NrdR-boxes. In Ehrlichia ruminantium (strain Gardel), this protein is Transcriptional repressor NrdR.